Consider the following 227-residue polypeptide: Uracil-DNA glycosylase (227 aa).

Aspartate 64 acts as the Proton acceptor in catalysis.

The protein belongs to the uracil-DNA glycosylase (UDG) superfamily. UNG family.

Its subcellular location is the cytoplasm. It catalyses the reaction Hydrolyzes single-stranded DNA or mismatched double-stranded DNA and polynucleotides, releasing free uracil.. Its function is as follows. Excises uracil residues from the DNA which can arise as a result of misincorporation of dUMP residues by DNA polymerase or due to deamination of cytosine. In Alkaliphilus metalliredigens (strain QYMF), this protein is Uracil-DNA glycosylase.